Consider the following 116-residue polypeptide: Methionine-R-sulfoxide reductase B1 (116 aa).

The 106-residue stretch at 1 to 106 folds into the MsrB domain; it reads MSFCSFFGGE…FSSSLKFVPK (106 aa). Zn(2+)-binding residues include Cys23, Cys26, Cys71, and Cys74. Sec95 functions as the Nucleophile in the catalytic mechanism. Sec95 is a non-standard amino acid (selenocysteine).

This sequence belongs to the MsrB Met sulfoxide reductase family. Requires Zn(2+) as cofactor. In terms of processing, truncated MSRB1/SEPX1 proteins produced by failed UGA/Sec decoding are ubiquitinated by some Cul2-RING E3 ubiquitin-protein ligase complexes (containing either PRAME, PRAMF6, PRAMF9 or FEM1C as substrate-recognition component).

The protein resides in the cytoplasm. The protein localises to the nucleus. Its subcellular location is the cytoskeleton. It catalyses the reaction L-methionyl-[protein] + [thioredoxin]-disulfide + H2O = L-methionyl-(R)-S-oxide-[protein] + [thioredoxin]-dithiol. The catalysed reaction is [thioredoxin]-disulfide + L-methionine + H2O = L-methionine (R)-S-oxide + [thioredoxin]-dithiol. In terms of biological role, methionine-sulfoxide reductase that specifically reduces methionine (R)-sulfoxide back to methionine. While in many cases, methionine oxidation is the result of random oxidation following oxidative stress, methionine oxidation is also a post-translational modification that takes place on specific residue. Acts as a regulator of actin assembly by reducing methionine (R)-sulfoxide mediated by MICALs (MICAL1, MICAL2 or MICAL3) on actin, thereby promoting filament repolymerization. Plays a role in innate immunity by reducing oxidized actin, leading to actin repolymerization in macrophages. The polypeptide is Methionine-R-sulfoxide reductase B1 (MSRB1) (Homo sapiens (Human)).